Consider the following 246-residue polypeptide: tRNA (guanine-N(7)-)-methyltransferase (246 aa).

S-adenosyl-L-methionine contacts are provided by glutamate 77, glutamate 102, aspartate 129, and aspartate 152. Aspartate 152 is a catalytic residue. Substrate is bound by residues lysine 156, aspartate 188, and 225-228 (TKFE).

It belongs to the class I-like SAM-binding methyltransferase superfamily. TrmB family.

It carries out the reaction guanosine(46) in tRNA + S-adenosyl-L-methionine = N(7)-methylguanosine(46) in tRNA + S-adenosyl-L-homocysteine. It functions in the pathway tRNA modification; N(7)-methylguanine-tRNA biosynthesis. In terms of biological role, catalyzes the formation of N(7)-methylguanine at position 46 (m7G46) in tRNA. In Haemophilus influenzae (strain ATCC 51907 / DSM 11121 / KW20 / Rd), this protein is tRNA (guanine-N(7)-)-methyltransferase.